The primary structure comprises 190 residues: Cysteine dioxygenase (190 aa).

His78, His80, and His132 together coordinate Fe cation. A cross-link (3'-(S-cysteinyl)-tyrosine (Cys-Tyr)) is located at residues 85 to 149 (CFVKILDGEL…SNGAVSLHLY (65 aa)).

The protein belongs to the cysteine dioxygenase family. The cofactor is Fe cation. The thioether cross-link between Cys-85 and Tyr-149 plays a structural role through stabilizing the Fe(2+) ion, and prevents the production of highly damaging free hydroxyl radicals by holding the oxygen radical via hydroxyl hydrogen.

It carries out the reaction L-cysteine + O2 = 3-sulfino-L-alanine + H(+). Its pathway is organosulfur biosynthesis; taurine biosynthesis; hypotaurine from L-cysteine: step 1/2. In Caenorhabditis briggsae, this protein is Cysteine dioxygenase (cdo-1).